The following is a 505-amino-acid chain: Deoxyguanosinetriphosphate triphosphohydrolase (505 aa).

One can recognise an HD domain in the interval 66 to 273 (RLTHSMEVQQ…MEAADDISYC (208 aa)).

Belongs to the dGTPase family. Type 1 subfamily. As to quaternary structure, homotetramer. It depends on Mg(2+) as a cofactor.

It catalyses the reaction dGTP + H2O = 2'-deoxyguanosine + triphosphate + H(+). DGTPase preferentially hydrolyzes dGTP over the other canonical NTPs. The chain is Deoxyguanosinetriphosphate triphosphohydrolase from Serratia proteamaculans (strain 568).